Here is a 336-residue protein sequence, read N- to C-terminus: Phosphoribosylformylglycinamidine cyclo-ligase (336 aa).

It belongs to the AIR synthase family.

It localises to the cytoplasm. It carries out the reaction 2-formamido-N(1)-(5-O-phospho-beta-D-ribosyl)acetamidine + ATP = 5-amino-1-(5-phospho-beta-D-ribosyl)imidazole + ADP + phosphate + H(+). It functions in the pathway purine metabolism; IMP biosynthesis via de novo pathway; 5-amino-1-(5-phospho-D-ribosyl)imidazole from N(2)-formyl-N(1)-(5-phospho-D-ribosyl)glycinamide: step 2/2. This chain is Phosphoribosylformylglycinamidine cyclo-ligase, found in Thermoanaerobacter pseudethanolicus (strain ATCC 33223 / 39E) (Clostridium thermohydrosulfuricum).